Here is a 344-residue protein sequence, read N- to C-terminus: Homoserine O-acetyltransferase (344 aa).

The Acyl-thioester intermediate role is filled by Cys142. Lys163 and Ser192 together coordinate substrate. The Proton acceptor role is filled by His235. Residue Glu237 is part of the active site. Arg249 provides a ligand contact to substrate.

This sequence belongs to the MetA family.

It is found in the cytoplasm. It catalyses the reaction L-homoserine + acetyl-CoA = O-acetyl-L-homoserine + CoA. The protein operates within amino-acid biosynthesis; L-methionine biosynthesis via de novo pathway; O-acetyl-L-homoserine from L-homoserine: step 1/1. Its function is as follows. Transfers an acetyl group from acetyl-CoA to L-homoserine, forming acetyl-L-homoserine. This is Homoserine O-acetyltransferase from Bifidobacterium adolescentis (strain ATCC 15703 / DSM 20083 / NCTC 11814 / E194a).